A 276-amino-acid polypeptide reads, in one-letter code: WIMGHMVNEIYQIDEFVDLGANSIETDITFDDDAIAEYTYHGVPCDCKRWCTKWENVNDFLHGLQRATTPGNSKYRPELVLVVFDLKTGDLSSSTAYKAGNMFAQKLFIHYWNAGNNGGRAYIVLSIPDIDHYAFISGFREAFKNSDHADLLDKVGYDFSGNDDLSATRNALNKGGVKDREHVWQSDGITNCIGRGLGRVRDAVANRDSSNGYINKVYVWTIEKYVSVRDAFDAGVDGIMTNEPDVIVDVLNESAYSSKFRMATYEDNPWETFKYK.

Histidine 5 is an active-site residue. Positions 25 and 27 each coordinate Mg(2+). Residue histidine 41 is the Nucleophile of the active site. Intrachain disulfides connect cysteine 45/cysteine 51 and cysteine 47/cysteine 192. Aspartate 85 contacts Mg(2+).

This sequence belongs to the arthropod phospholipase D family. Class II subfamily. Mg(2+) is required as a cofactor. As to expression, expressed by the venom gland.

The protein resides in the secreted. The catalysed reaction is an N-(acyl)-sphingosylphosphocholine = an N-(acyl)-sphingosyl-1,3-cyclic phosphate + choline. The enzyme catalyses an N-(acyl)-sphingosylphosphoethanolamine = an N-(acyl)-sphingosyl-1,3-cyclic phosphate + ethanolamine. It catalyses the reaction a 1-acyl-sn-glycero-3-phosphocholine = a 1-acyl-sn-glycero-2,3-cyclic phosphate + choline. It carries out the reaction a 1-acyl-sn-glycero-3-phosphoethanolamine = a 1-acyl-sn-glycero-2,3-cyclic phosphate + ethanolamine. Functionally, dermonecrotic toxins cleave the phosphodiester linkage between the phosphate and headgroup of certain phospholipids (sphingolipid and lysolipid substrates), forming an alcohol (often choline) and a cyclic phosphate. This toxin acts on sphingomyelin (SM). It may also act on ceramide phosphoethanolamine (CPE), lysophosphatidylcholine (LPC) and lysophosphatidylethanolamine (LPE), but not on lysophosphatidylserine (LPS), and lysophosphatidylglycerol (LPG). It acts by transphosphatidylation, releasing exclusively cyclic phosphate products as second products. Induces dermonecrosis, hemolysis, increased vascular permeability, edema, inflammatory response, and platelet aggregation. The protein is Dermonecrotic toxin LlSicTox-alphaIV3 of Loxosceles laeta (South American recluse spider).